The sequence spans 388 residues: Mannitol-1-phosphate 5-dehydrogenase (388 aa).

Residue A5–G16 coordinates NAD(+). K213 is a catalytic residue.

The protein belongs to the mannitol dehydrogenase family. In terms of assembly, monomer.

It catalyses the reaction D-mannitol 1-phosphate + NAD(+) = beta-D-fructose 6-phosphate + NADH + H(+). Its function is as follows. Catalyzes the NAD(H)-dependent interconversion of D-fructose 6-phosphate and D-mannitol 1-phosphate in the mannitol metabolic pathway. The sequence is that of Mannitol-1-phosphate 5-dehydrogenase (mpdA) from Aspergillus terreus (strain NIH 2624 / FGSC A1156).